The sequence spans 336 residues: Phosphoribosylformylglycinamidine cyclo-ligase (336 aa).

It belongs to the AIR synthase family.

It is found in the cytoplasm. The enzyme catalyses 2-formamido-N(1)-(5-O-phospho-beta-D-ribosyl)acetamidine + ATP = 5-amino-1-(5-phospho-beta-D-ribosyl)imidazole + ADP + phosphate + H(+). The protein operates within purine metabolism; IMP biosynthesis via de novo pathway; 5-amino-1-(5-phospho-D-ribosyl)imidazole from N(2)-formyl-N(1)-(5-phospho-D-ribosyl)glycinamide: step 2/2. This is Phosphoribosylformylglycinamidine cyclo-ligase from Thermoanaerobacter sp. (strain X514).